Here is a 451-residue protein sequence, read N- to C-terminus: MDYEKNVTLKEKSHAELSVKIKKSDVQESYKKLLNKYSKELQIPGFRKGKVPVSVLETKYGDAIKGDLAGDLIEESLKEIFESLDEYERPLPYSYPELNEKPELKVEEDFSFTVHYDVFPKVEIKKTEGFTIEVPEASVSEKDIKKELERLQERNALVTACKEGTSAEKDHIATIDYCELDDEGKTISGTERKDFVFTIGSGLNIYKIDDDIVGMKKGESKEITKTFPEDDSNKDLAGKTKKIKVTLTALKYKDLPALDDDFAQDINEKYKNLDELKADIKKKFEISVEEKIKSLQKNALTEQMVKEHTIDLPESMVRAELESRWMMMANQFRTTPEELEKMFGKGPQSKAALLEGWREDSEKTLKERVLIETLLKEKNIEVSDDEIEAEYVRLSERMDIALDELKKYYSNPREKEYLSEGLKEEKLFKALYEKSTIKKGKKLTFDELLKD.

Residues Asp170–Pro256 form the PPIase FKBP-type domain.

The protein belongs to the FKBP-type PPIase family. Tig subfamily.

The protein resides in the cytoplasm. It carries out the reaction [protein]-peptidylproline (omega=180) = [protein]-peptidylproline (omega=0). Functionally, involved in protein export. Acts as a chaperone by maintaining the newly synthesized protein in an open conformation. Functions as a peptidyl-prolyl cis-trans isomerase. This Treponema denticola (strain ATCC 35405 / DSM 14222 / CIP 103919 / JCM 8153 / KCTC 15104) protein is Trigger factor.